We begin with the raw amino-acid sequence, 391 residues long: 3-ketoacyl-CoA thiolase (391 aa).

Residue C95 is the Acyl-thioester intermediate of the active site. Active-site proton acceptor residues include H347 and C377.

Belongs to the thiolase-like superfamily. Thiolase family. In terms of assembly, heterotetramer of two alpha chains (FadB) and two beta chains (FadA).

It is found in the cytoplasm. It carries out the reaction an acyl-CoA + acetyl-CoA = a 3-oxoacyl-CoA + CoA. It functions in the pathway lipid metabolism; fatty acid beta-oxidation. Functionally, catalyzes the final step of fatty acid oxidation in which acetyl-CoA is released and the CoA ester of a fatty acid two carbons shorter is formed. The chain is 3-ketoacyl-CoA thiolase from Pseudomonas fluorescens (strain Pf0-1).